The chain runs to 147 residues: MAKPIIDDELWTLIEPLLPPPKPRREKNPGRLPVSNRAALTGILFVLKTGLRWRDLPAEMGCGSGVTCWRRLRDWQAAGVWDRLHELLLAKLRAADQIDFSRAAVDSSSIRAVGAGQKLGQTPPIARDPVPSTTSSPTPTVRRSPRS.

The segment at 106-147 (DSSSIRAVGAGQKLGQTPPIARDPVPSTTSSPTPTVRRSPRS) is disordered. Low complexity predominate over residues 129-147 (PVPSTTSSPTPTVRRSPRS).

Belongs to the transposase 6 family.

This is Insertion element IS402 uncharacterized 16.2 kDa protein from Burkholderia cepacia (Pseudomonas cepacia).